The primary structure comprises 284 residues: Orotidine 5'-phosphate decarboxylase (284 aa).

Residues Asp-42, 64-66 (KTH), 96-105 (DRKFADIGNT), Tyr-237, and Arg-255 each bind substrate. Lys-98 (proton donor) is an active-site residue.

It belongs to the OMP decarboxylase family.

The enzyme catalyses orotidine 5'-phosphate + H(+) = UMP + CO2. It participates in pyrimidine metabolism; UMP biosynthesis via de novo pathway; UMP from orotate: step 2/2. In Magnusiomyces magnusii (Yeast), this protein is Orotidine 5'-phosphate decarboxylase (URA3).